The primary structure comprises 420 residues: Glycerol-3-phosphate dehydrogenase [NAD(+)] (420 aa).

NAD(+) is bound by residues 16 to 21, Phe-48, and Phe-119; that span reads GSGNWG. Lys-142 lines the substrate pocket. Ala-175 provides a ligand contact to NAD(+). The tract at residues 190-217 is disordered; that stretch reads YDPPPMDNSRAPTPRSNSPANGNGIAPL. The span at 199–210 shows a compositional bias: polar residues; it reads RAPTPRSNSPAN. Catalysis depends on Lys-278, which acts as the Proton acceptor. 2 residues coordinate NAD(+): Arg-344 and Gln-373. Residue 344–345 participates in substrate binding; the sequence is RN.

It belongs to the NAD-dependent glycerol-3-phosphate dehydrogenase family.

It carries out the reaction sn-glycerol 3-phosphate + NAD(+) = dihydroxyacetone phosphate + NADH + H(+). The polypeptide is Glycerol-3-phosphate dehydrogenase [NAD(+)] (Colletotrichum gloeosporioides (Anthracnose fungus)).